Here is a 122-residue protein sequence, read N- to C-terminus: Large ribosomal subunit protein bL12 (122 aa).

The disordered stretch occupies residues alanine 96–threonine 122. A compositionally biased stretch (basic and acidic residues) spans leucine 104–threonine 122.

This sequence belongs to the bacterial ribosomal protein bL12 family. In terms of assembly, homodimer. Part of the ribosomal stalk of the 50S ribosomal subunit. Forms a multimeric L10(L12)X complex, where L10 forms an elongated spine to which 2 to 4 L12 dimers bind in a sequential fashion. Binds GTP-bound translation factors.

In terms of biological role, forms part of the ribosomal stalk which helps the ribosome interact with GTP-bound translation factors. Is thus essential for accurate translation. In Liberibacter asiaticus (Citrus greening disease), this protein is Large ribosomal subunit protein bL12.